The sequence spans 172 residues: Type II secretion system protein H (172 aa).

Positions 1–6 are cleaved as a propeptide — leader sequence; the sequence is MRASRG. Phenylalanine 7 is subject to N-methylphenylalanine. The chain crosses the membrane as a helical span at residues 7–27; the sequence is FTLIELMVVMVIISVLIGLAV.

It belongs to the GSP H family. As to quaternary structure, type II secretion is composed of four main components: the outer membrane complex, the inner membrane complex, the cytoplasmic secretion ATPase and the periplasm-spanning pseudopilus. Forms the tip of the type II pseudopilus by interacting with XcpV, XcpW and XcpX. Interacts with core component XcpT. In terms of processing, cleaved by prepilin peptidase. Post-translationally, methylated by prepilin peptidase at the amino group of the N-terminal phenylalanine once the leader sequence is cleaved by prepilin peptidase.

It is found in the cell inner membrane. In terms of biological role, component of the type II secretion system required for the energy-dependent secretion of extracellular factors such as proteases and toxins from the periplasm. Part of the pseudopilus tip complex that is critical for the recognition and binding of secretion substrates. Type II pseudopilus confers increased bacterial adhesive capabilities. In Pseudomonas aeruginosa (strain ATCC 15692 / DSM 22644 / CIP 104116 / JCM 14847 / LMG 12228 / 1C / PRS 101 / PAO1), this protein is Type II secretion system protein H (xcpU).